A 267-amino-acid chain; its full sequence is Serine/arginine-rich splicing factor 7 (267 aa).

The RRM domain maps to 40–113; it reads TKVYVGNLGT…SRVRVELSTG (74 aa). Residue Lys-53 is modified to N6-acetyllysine; alternate. A Glycyl lysine isopeptide (Lys-Gly) (interchain with G-Cter in SUMO2); alternate cross-link involves residue Lys-53. Ser-61 is subject to Phosphoserine. The sufficient for interaction with NXF1 stretch occupies residues 110–127; that stretch reads LSTGMPRRSRFDRPPARR. A CCHC-type zinc finger spans residues 133–150; sequence DRCYECGEKGHYAYDCHR. Positions 152–209 are enriched in basic residues; sequence SRRRRSRSRSRSHSRSRGRRYSRSRSRSRGRRSRSASPRRSRSVSLRRSRSASLRRSR. The interval 152–267 is disordered; it reads SRRRRSRSRS…HRSASPERMD (116 aa). 4 consecutive repeat copies span residues 182–189, 190–197, 198–205, and 206–213. Residues 182 to 255 are 6 X 8 AA repeats of R-R-S-R-S-X-S-X; sequence RRSRSASPRR…SPKRSRSPSG (74 aa). 3 positions are modified to phosphoserine: Ser-192, Ser-194, and Ser-196. Residues Ser-210, Ser-212, Ser-221, Ser-223, and Ser-225 each carry the phosphoserine modification. A compositionally biased stretch (basic residues) spans 223 to 251; the sequence is SRSRSRSRSISRPRSSRSKSRSPSPKRSR. One copy of the 5; approximate repeat lies at 240–247; sequence SKSRSPSP. The 6; approximate repeat unit spans residues 248-255; the sequence is KRSRSPSG. Phosphoserine is present on residues Ser-260 and Ser-262.

This sequence belongs to the splicing factor SR family. As to quaternary structure, found in large molecular weight complexes containing CCNL1 and the p110 isoforms of either CDC2L1 or CDC2L2. Interacts with CCNL2 and CPSF6. Interacts with NXF1. Interacts with YTHDC1. In terms of processing, extensively phosphorylated on serine residues in the RS domain.

It is found in the nucleus. The protein localises to the cytoplasm. Functionally, required for pre-mRNA splicing. Represses the splicing of MAPT/Tau exon 10. May function as export adapter involved in mRNA nuclear export such as of histone H2A. Binds mRNA which is thought to be transferred to the NXF1-NXT1 heterodimer for export (TAP/NXF1 pathway); enhances NXF1-NXT1 RNA-binding activity. RNA-binding is semi-sequence specific. The protein is Serine/arginine-rich splicing factor 7 (Srsf7) of Mus musculus (Mouse).